The primary structure comprises 499 residues: Aspartyl/glutamyl-tRNA(Asn/Gln) amidotransferase subunit B (499 aa).

It belongs to the GatB/GatE family. GatB subfamily. Heterotrimer of A, B and C subunits.

The catalysed reaction is L-glutamyl-tRNA(Gln) + L-glutamine + ATP + H2O = L-glutaminyl-tRNA(Gln) + L-glutamate + ADP + phosphate + H(+). The enzyme catalyses L-aspartyl-tRNA(Asn) + L-glutamine + ATP + H2O = L-asparaginyl-tRNA(Asn) + L-glutamate + ADP + phosphate + 2 H(+). In terms of biological role, allows the formation of correctly charged Asn-tRNA(Asn) or Gln-tRNA(Gln) through the transamidation of misacylated Asp-tRNA(Asn) or Glu-tRNA(Gln) in organisms which lack either or both of asparaginyl-tRNA or glutaminyl-tRNA synthetases. The reaction takes place in the presence of glutamine and ATP through an activated phospho-Asp-tRNA(Asn) or phospho-Glu-tRNA(Gln). The chain is Aspartyl/glutamyl-tRNA(Asn/Gln) amidotransferase subunit B from Bartonella bacilliformis (strain ATCC 35685 / KC583 / Herrer 020/F12,63).